Consider the following 486-residue polypeptide: Argininosuccinate lyase (486 aa).

The protein belongs to the lyase 1 family. Argininosuccinate lyase subfamily.

It localises to the cytoplasm. It carries out the reaction 2-(N(omega)-L-arginino)succinate = fumarate + L-arginine. Its pathway is amino-acid biosynthesis; L-arginine biosynthesis; L-arginine from L-ornithine and carbamoyl phosphate: step 3/3. In Acidobacterium capsulatum (strain ATCC 51196 / DSM 11244 / BCRC 80197 / JCM 7670 / NBRC 15755 / NCIMB 13165 / 161), this protein is Argininosuccinate lyase.